The sequence spans 414 residues: 25-hydroxycholesterol 7-alpha-hydroxylase (414 aa).

Cysteine 354 is a binding site for heme.

This sequence belongs to the cytochrome P450 family. Heme is required as a cofactor. As to expression, highly expressed in brain; also expressed in liver and kidney.

Its subcellular location is the endoplasmic reticulum membrane. The protein localises to the microsome membrane. The catalysed reaction is 25-hydroxycholesterol + reduced [NADPH--hemoprotein reductase] + O2 = 7alpha,25-dihydroxycholesterol + oxidized [NADPH--hemoprotein reductase] + H2O + H(+). The enzyme catalyses (25R)-cholest-5-ene-3beta,26-diol + reduced [NADPH--hemoprotein reductase] + O2 = (25R)-cholest-5-en-3beta,7alpha,26-triol + oxidized [NADPH--hemoprotein reductase] + H2O + H(+). It functions in the pathway lipid metabolism; bile acid biosynthesis. Functionally, oxysterol 7alpha-hydroxylase that mediates formation of 7-alpha,25-dihydroxycholesterol (7-alpha,25-OHC) from 25-hydroxycholesterol. Plays a key role in cell positioning and movement in lymphoid tissues: 7-alpha,25-dihydroxycholesterol (7-alpha,25-OHC) acts as a ligand for the G protein-coupled receptor GPR183/EBI2, a chemotactic receptor for a number of lymphoid cells. This is 25-hydroxycholesterol 7-alpha-hydroxylase (Cyp7b1) from Rattus norvegicus (Rat).